Reading from the N-terminus, the 306-residue chain is Replication termination factor 2 (306 aa).

A disordered region spans residues 193-276 (AKLEKKTKKP…RSIADSEESE (84 aa)). The span at 226–240 (GKPEEASLDSREKKT) shows a compositional bias: basic and acidic residues. Residues 243–255 (APKSTAMNESSSG) show a composition bias toward polar residues. Ser287 is subject to Phosphoserine.

It belongs to the rtf2 family. As to quaternary structure, interacts with DDI2; probably also interacts with DDI1. Post-translationally, undergoes proteasomal degradation, via DDI1 and DDI2. Removal from stalled replisomes and degradation are required for genome stability.

The protein resides in the chromosome. In terms of biological role, replication termination factor which is a component of the elongating replisome. Required for ATR pathway signaling upon DNA damage and has a positive activity during DNA replication. Might function to facilitate fork pausing at replication fork barriers like the rDNA. May be globally required to stimulate ATR signaling after the fork stalls or encounters a lesion. Interacts with nascent DNA. This chain is Replication termination factor 2, found in Homo sapiens (Human).